The primary structure comprises 670 residues: DNA ligase (670 aa).

NAD(+)-binding positions include 35–39 (DSVYD), 84–85 (SL), and Glu116. Lys118 acts as the N6-AMP-lysine intermediate in catalysis. Arg139, Glu176, Lys293, and Lys317 together coordinate NAD(+). 4 residues coordinate Zn(2+): Cys411, Cys414, Cys429, and Cys435. Residues 592–670 (VVKSEIAGKT…EEAFLKLLKS (79 aa)) enclose the BRCT domain.

Belongs to the NAD-dependent DNA ligase family. LigA subfamily. Mg(2+) is required as a cofactor. It depends on Mn(2+) as a cofactor.

The catalysed reaction is NAD(+) + (deoxyribonucleotide)n-3'-hydroxyl + 5'-phospho-(deoxyribonucleotide)m = (deoxyribonucleotide)n+m + AMP + beta-nicotinamide D-nucleotide.. Its function is as follows. DNA ligase that catalyzes the formation of phosphodiester linkages between 5'-phosphoryl and 3'-hydroxyl groups in double-stranded DNA using NAD as a coenzyme and as the energy source for the reaction. It is essential for DNA replication and repair of damaged DNA. The chain is DNA ligase from Coxiella burnetii (strain RSA 331 / Henzerling II).